The sequence spans 157 residues: MLNIVLYEPEIPPNTGNIIRLCANTGFRLHIIEPMGFAWDDKRLRRAGLDYHEFTAVTRHHDYRAFLEAENPQRLFALTTKGTPAHSAVSYQDGDYLMFGPETRGLPASILDALPAEQKIRIPMVPDSRSMNLSNAVSVVVYEAWRQLGYPGAVLRD.

S-adenosyl-L-methionine contacts are provided by Leu-78, Gly-100, Ile-122, and Ser-130.

Belongs to the class IV-like SAM-binding methyltransferase superfamily. RNA methyltransferase TrmH family. TrmL subfamily. As to quaternary structure, homodimer.

The protein resides in the cytoplasm. It carries out the reaction cytidine(34) in tRNA + S-adenosyl-L-methionine = 2'-O-methylcytidine(34) in tRNA + S-adenosyl-L-homocysteine + H(+). The catalysed reaction is 5-carboxymethylaminomethyluridine(34) in tRNA(Leu) + S-adenosyl-L-methionine = 5-carboxymethylaminomethyl-2'-O-methyluridine(34) in tRNA(Leu) + S-adenosyl-L-homocysteine + H(+). In terms of biological role, methylates the ribose at the nucleotide 34 wobble position in the two leucyl isoacceptors tRNA(Leu)(CmAA) and tRNA(Leu)(cmnm5UmAA). Catalyzes the methyl transfer from S-adenosyl-L-methionine to the 2'-OH of the wobble nucleotide. This is tRNA (cytidine(34)-2'-O)-methyltransferase from Escherichia coli O6:H1 (strain CFT073 / ATCC 700928 / UPEC).